Reading from the N-terminus, the 432-residue chain is Enolase (432 aa).

Residue glutamine 167 coordinates (2R)-2-phosphoglycerate. The active-site Proton donor is glutamate 209. The Mg(2+) site is built by aspartate 246, glutamate 290, and aspartate 317. Lysine 342, arginine 371, serine 372, and lysine 393 together coordinate (2R)-2-phosphoglycerate. The active-site Proton acceptor is the lysine 342.

This sequence belongs to the enolase family. As to quaternary structure, component of the RNA degradosome, a multiprotein complex involved in RNA processing and mRNA degradation. Mg(2+) is required as a cofactor.

The protein localises to the cytoplasm. The protein resides in the secreted. Its subcellular location is the cell surface. It catalyses the reaction (2R)-2-phosphoglycerate = phosphoenolpyruvate + H2O. The protein operates within carbohydrate degradation; glycolysis; pyruvate from D-glyceraldehyde 3-phosphate: step 4/5. Functionally, catalyzes the reversible conversion of 2-phosphoglycerate (2-PG) into phosphoenolpyruvate (PEP). It is essential for the degradation of carbohydrates via glycolysis. The chain is Enolase from Escherichia coli O139:H28 (strain E24377A / ETEC).